The primary structure comprises 355 residues: Guanine nucleotide-binding protein G(z) subunit alpha (355 aa).

The segment covering 1-14 (MGCRQSSEEKEAAR) has biased composition (basic and acidic residues). The disordered stretch occupies residues 1-26 (MGCRQSSEEKEAARRSRRIDRHLRSE). The N-myristoyl glycine moiety is linked to residue Gly-2. A lipid anchor (S-palmitoyl cysteine) is attached at Cys-3. The G-alpha domain maps to 32 to 355 (REIKLLLLGT…QNNLKYIGLC (324 aa)). Residues 35-48 (KLLLLGTSNSGKST) form a G1 motif region. Residues 40-47 (GTSNSGKS), 176-182 (LRSRDMT), 201-205 (DVGGQ), 270-273 (NKKD), and Ala-327 each bind GTP. Position 47 (Ser-47) interacts with Mg(2+). The tract at residues 174–182 (DILRSRDMT) is G2 motif. Position 179 is an ADP-ribosylarginine; by cholera toxin (Arg-179). Position 182 (Thr-182) interacts with Mg(2+). The segment at 197 to 206 (FKMVDVGGQR) is G3 motif. The tract at residues 266–273 (ILFLNKKD) is G4 motif. Residues 325-330 (TCATDT) form a G5 motif region.

Belongs to the G-alpha family. G(i/o/t/z) subfamily. In terms of assembly, G-proteins are composed of 3 units; alpha, beta and gamma. The alpha chain contains the guanine nucleotide binding site. Interacts with ADGRB2.

Its subcellular location is the membrane. Guanine nucleotide-binding proteins (G proteins) are involved as modulators or transducers in various transmembrane signaling systems. In Homo sapiens (Human), this protein is Guanine nucleotide-binding protein G(z) subunit alpha (GNAZ).